The primary structure comprises 300 residues: ATP synthase gamma chain (300 aa).

This sequence belongs to the ATPase gamma chain family. As to quaternary structure, F-type ATPases have 2 components, CF(1) - the catalytic core - and CF(0) - the membrane proton channel. CF(1) has five subunits: alpha(3), beta(3), gamma(1), delta(1), epsilon(1). CF(0) has three main subunits: a, b and c.

Its subcellular location is the cell membrane. Functionally, produces ATP from ADP in the presence of a proton gradient across the membrane. The gamma chain is believed to be important in regulating ATPase activity and the flow of protons through the CF(0) complex. This chain is ATP synthase gamma chain, found in Enterococcus hirae (strain ATCC 9790 / DSM 20160 / JCM 8729 / LMG 6399 / NBRC 3181 / NCIMB 6459 / NCDO 1258 / NCTC 12367 / WDCM 00089 / R).